Reading from the N-terminus, the 590-residue chain is Aspartate--tRNA ligase (590 aa).

Glu-172 serves as a coordination point for L-aspartate. The segment at 196–199 is aspartate; that stretch reads QLFK. Arg-218 is a binding site for L-aspartate. ATP-binding positions include 218 to 220 and Gln-227; that span reads RDE. His-449 provides a ligand contact to L-aspartate. Glu-483 lines the ATP pocket. Arg-490 contacts L-aspartate. ATP is bound at residue 535 to 538; sequence GLDR.

Belongs to the class-II aminoacyl-tRNA synthetase family. Type 1 subfamily. In terms of assembly, homodimer.

It is found in the cytoplasm. It carries out the reaction tRNA(Asp) + L-aspartate + ATP = L-aspartyl-tRNA(Asp) + AMP + diphosphate. Its function is as follows. Catalyzes the attachment of L-aspartate to tRNA(Asp) in a two-step reaction: L-aspartate is first activated by ATP to form Asp-AMP and then transferred to the acceptor end of tRNA(Asp). This Mannheimia succiniciproducens (strain KCTC 0769BP / MBEL55E) protein is Aspartate--tRNA ligase.